The primary structure comprises 203 residues: MGSSFVIDRSSSSPAPPRGPAPKLSAHARKIICKISPNRSFLFIISLHICEKYFISMGLRGHRSRFSRSVSTFFSPGKLACIAHLRVGCQIVPIFPYGAFLKTPYNRCAGNKVSESTHRRAVVRPSTRYFVTTFQDTETQLIIVSSVEVKKRKGIVILSIEFQSMHLKQRVDHHVVCLKGLVRPGNLVRLQQTSGTFLHFSRP.

The tract at residues 1 to 23 (MGSSFVIDRSSSSPAPPRGPAPK) is disordered.

This is an uncharacterized protein from Saccharomyces cerevisiae (strain ATCC 204508 / S288c) (Baker's yeast).